We begin with the raw amino-acid sequence, 136 residues long: Prefoldin subunit alpha (136 aa).

Belongs to the prefoldin subunit alpha family. As to quaternary structure, heterohexamer of two alpha and four beta subunits.

The protein resides in the cytoplasm. Molecular chaperone capable of stabilizing a range of proteins. Seems to fulfill an ATP-independent, HSP70-like function in archaeal de novo protein folding. The polypeptide is Prefoldin subunit alpha (Pyrobaculum arsenaticum (strain DSM 13514 / JCM 11321 / PZ6)).